A 67-amino-acid chain; its full sequence is Large ribosomal subunit protein eL38 (67 aa).

Belongs to the eukaryotic ribosomal protein eL38 family.

The sequence is that of Large ribosomal subunit protein eL38 (rpl38e) from Aeropyrum pernix (strain ATCC 700893 / DSM 11879 / JCM 9820 / NBRC 100138 / K1).